Here is a 445-residue protein sequence, read N- to C-terminus: MEITSSAMLKTTTTPPHPLAGEKVPLSAFDRAAFDVFVPLVFAYRAPAPSSEAVKEGLRVAVAAYPLVSGRIAVDGQGRRRRRRVLHVNNEGVLVLDATVEVDLDAVLAANVATDLYPALPEHSFGAALLQVQLTRFGCGGLVVGLIGHHHVFDGHSMSTFCATWARAVRDSEAFIVPSPSLDRAITGVPRSPPAPVFDHRSIEFKVGNKSSDSSGAAAAAAVEKIANIGVRFTAKFVAELKARVGGRCSTFECVLAHAWKKITAARGLKPEEFTRVRVAVNCRRRANPPAPADLFGNMVLWAFPRLQVRRLLSSSYRDVVGAIRAAVARVDAEYIQSFVDYVEVADARGEELAATAAEPGETLCPDLEVDSWLGFRFHEMDLGTGPPAAVLSPDLPIEGLMILVPVGGDGGGVDLFVALADDHAQAFEQICYSLEEHAMIHSHL.

Residues His150 and Asp382 each act as proton acceptor in the active site.

The protein belongs to the plant acyltransferase family.

Hydroxycinnamoyl transferase that catalyzes the transfer of an acyl from benzoyl-CoA to tryptamine, to produce benzoyl tryptamine. Serotonin and tyramine serve as acyl acceptors in vitro. Can use p-coumaroyl-CoA, and to a lesser extent caffeoyl-CoA, as acyl donors. The sequence is that of Tryptamine benzoyltransferase 1 from Oryza sativa subsp. japonica (Rice).